The following is a 567-amino-acid chain: Major facilitator superfamily transporter MG061 (567 aa).

Helical transmembrane passes span 15–35 (ITLWIIVIFGYLLFVVEWFVI), 78–98 (WTITLLRAVGSILCGVVVLKF), 104–124 (VLIMMGIMCVCFPFLIIGDPL), 193–213 (GYALFIIFRSTIAIGGTTLVV), 230–250 (ILSNANLWGFNIGIAVVFTPF), 264–284 (VYIMTVMILVVFANLCLFLWF), 321–341 (LIGVYGIVLILIVNPLTPAWF), 363–383 (TGLATLAIFWVIGYALGFVVF), 405–425 (IVVLLIIIMFAATLGIGSAAG), 426–446 (FALISIFSFIGGAFAWSLSSS), 462–482 (LPILFGFCWGFGYIAYTLFDI), and 503–523 (PGVIVSIVFFLGLIALANLIV).

Belongs to the major facilitator superfamily.

The protein resides in the cell membrane. The protein is Major facilitator superfamily transporter MG061 of Mycoplasma genitalium (strain ATCC 33530 / DSM 19775 / NCTC 10195 / G37) (Mycoplasmoides genitalium).